The sequence spans 142 residues: MSTYFPKGEVARKWFVVDADGQTLGRLASRVARILSGKDNPKYTPFIDTGDHVVVINAEKIKITGLKADNKKYYHYSGYPGGMKEEEFLKRLERRPELILETAIKGMLPKSKLGKAMGGKLKVYRGADHPHIAQKPEVLANA.

The protein belongs to the universal ribosomal protein uL13 family. As to quaternary structure, part of the 50S ribosomal subunit.

This protein is one of the early assembly proteins of the 50S ribosomal subunit, although it is not seen to bind rRNA by itself. It is important during the early stages of 50S assembly. The sequence is that of Large ribosomal subunit protein uL13 from Koribacter versatilis (strain Ellin345).